The chain runs to 293 residues: 33 kDa chaperonin (293 aa).

2 disulfide bridges follow: C237–C239 and C271–C274.

It belongs to the HSP33 family. Under oxidizing conditions two disulfide bonds are formed involving the reactive cysteines. Under reducing conditions zinc is bound to the reactive cysteines and the protein is inactive.

It is found in the cytoplasm. In terms of biological role, redox regulated molecular chaperone. Protects both thermally unfolding and oxidatively damaged proteins from irreversible aggregation. Plays an important role in the bacterial defense system toward oxidative stress. The protein is 33 kDa chaperonin of Haemophilus influenzae (strain 86-028NP).